An 803-amino-acid chain; its full sequence is Translation initiation factor IF-2 (803 aa).

Disordered stretches follow at residues 95–125 (PVVE…EKAE) and 138–178 (EVKE…EREE). Over residues 111–121 (VPLTSDTTNLN) the composition is skewed to polar residues. Over residues 138 to 155 (EVKEEAKKTPSEKKETPK) the composition is skewed to basic and acidic residues. A compositionally biased stretch (basic residues) spans 156–167 (KGPRKETRRSRK). Over residues 168-178 (PDKEDKWEREE) the composition is skewed to basic and acidic residues. Residues 302–471 (PRAPVVTIMG…LLQAEVLELK (170 aa)) enclose the tr-type G domain. Residues 311–318 (GHVDHGKT) form a G1 region. 311-318 (GHVDHGKT) lines the GTP pocket. The interval 336 to 340 (GITQH) is G2. The tract at residues 357 to 360 (DTPG) is G3. GTP is bound by residues 357–361 (DTPGH) and 411–414 (NKID). The interval 411–414 (NKID) is G4. The tract at residues 447–449 (SAK) is G5.

Belongs to the TRAFAC class translation factor GTPase superfamily. Classic translation factor GTPase family. IF-2 subfamily.

The protein resides in the cytoplasm. Functionally, one of the essential components for the initiation of protein synthesis. Protects formylmethionyl-tRNA from spontaneous hydrolysis and promotes its binding to the 30S ribosomal subunits. Also involved in the hydrolysis of GTP during the formation of the 70S ribosomal complex. The polypeptide is Translation initiation factor IF-2 (Coxiella burnetii (strain RSA 331 / Henzerling II)).